The chain runs to 471 residues: Glutamate--tRNA ligase 1 (471 aa).

The short motif at 15–25 (PSPTGYLHIGG) is the 'HIGH' region element. The 'KMSKS' region motif lies at 243-247 (KLSKR). Residue K246 participates in ATP binding.

It belongs to the class-I aminoacyl-tRNA synthetase family. Glutamate--tRNA ligase type 1 subfamily. Monomer.

Its subcellular location is the cytoplasm. It carries out the reaction tRNA(Glu) + L-glutamate + ATP = L-glutamyl-tRNA(Glu) + AMP + diphosphate. In terms of biological role, catalyzes the attachment of glutamate to tRNA(Glu) in a two-step reaction: glutamate is first activated by ATP to form Glu-AMP and then transferred to the acceptor end of tRNA(Glu). This Dinoroseobacter shibae (strain DSM 16493 / NCIMB 14021 / DFL 12) protein is Glutamate--tRNA ligase 1.